The sequence spans 255 residues: Ribonuclease HII (255 aa).

Residues 72–255 (AIICGIDEVG…KSFEPIKSLL (184 aa)) enclose the RNase H type-2 domain. Residues Asp-78, Glu-79, and Asp-170 each contribute to the a divalent metal cation site.

This sequence belongs to the RNase HII family. It depends on Mn(2+) as a cofactor. The cofactor is Mg(2+).

The protein localises to the cytoplasm. The catalysed reaction is Endonucleolytic cleavage to 5'-phosphomonoester.. In terms of biological role, endonuclease that specifically degrades the RNA of RNA-DNA hybrids. This chain is Ribonuclease HII, found in Staphylococcus aureus (strain USA300).